An 804-amino-acid polypeptide reads, in one-letter code: Protein SEY1 homolog 1 (804 aa).

Topologically, residues 1–638 (MEQIITGEGQ…SVLASQNNEH (638 aa)) are cytoplasmic. In terms of domain architecture, GB1/RHD3-type G spans 28 to 245 (GTDYHMVSII…EENYLFKEKS (218 aa)). Position 38 to 45 (38 to 45 (GCQSSGKS)) interacts with GTP. Residues 639–659 (IPPWAWFLFLFSCSDYILWWL) traverse the membrane as a helical segment. The Lumenal segment spans residues 660 to 662 (SNP). Residues 663–683 (LLFSLTVLFGGTYLVLNQLGL) traverse the membrane as a helical segment. At 684–804 (WDTAVQKLLD…RKRVRVGTLV (121 aa)) the chain is on the cytoplasmic side. The interval 706–804 (PDENNETETN…RKRVRVGTLV (99 aa)) is disordered. Residues 751-791 (QGLTKTESNVTFANVSNANDEQSLTKNNTEDSLNTGSSSSG) show a composition bias toward polar residues. Residues 792-804 (QRHRKRVRVGTLV) are compositionally biased toward basic residues.

It belongs to the TRAFAC class dynamin-like GTPase superfamily. GB1/RHD3 GTPase family. RHD3 subfamily.

Its subcellular location is the endoplasmic reticulum membrane. Its function is as follows. Probable GTP-binding protein that may be involved in cell development. The polypeptide is Protein SEY1 homolog 1 (Trichomonas vaginalis (strain ATCC PRA-98 / G3)).